Consider the following 179-residue polypeptide: Endoribonuclease YbeY (179 aa).

Zn(2+) is bound by residues His-148, His-152, and His-158.

It belongs to the endoribonuclease YbeY family. Requires Zn(2+) as cofactor.

The protein resides in the cytoplasm. Its function is as follows. Single strand-specific metallo-endoribonuclease involved in late-stage 70S ribosome quality control and in maturation of the 3' terminus of the 16S rRNA. This is Endoribonuclease YbeY from Prochlorococcus marinus (strain AS9601).